Consider the following 630-residue polypeptide: 1-deoxy-D-xylulose-5-phosphate synthase (630 aa).

Thiamine diphosphate is bound by residues H72 and 113-115 (GHS). D144 lines the Mg(2+) pocket. Thiamine diphosphate-binding positions include 145-146 (GA), N173, Y284, and E367. Position 173 (N173) interacts with Mg(2+).

The protein belongs to the transketolase family. DXPS subfamily. In terms of assembly, homodimer. The cofactor is Mg(2+). Requires thiamine diphosphate as cofactor.

The catalysed reaction is D-glyceraldehyde 3-phosphate + pyruvate + H(+) = 1-deoxy-D-xylulose 5-phosphate + CO2. It functions in the pathway metabolic intermediate biosynthesis; 1-deoxy-D-xylulose 5-phosphate biosynthesis; 1-deoxy-D-xylulose 5-phosphate from D-glyceraldehyde 3-phosphate and pyruvate: step 1/1. Its function is as follows. Catalyzes the acyloin condensation reaction between C atoms 2 and 3 of pyruvate and glyceraldehyde 3-phosphate to yield 1-deoxy-D-xylulose-5-phosphate (DXP). This chain is 1-deoxy-D-xylulose-5-phosphate synthase, found in Geobacillus thermodenitrificans (strain NG80-2).